The following is a 196-amino-acid chain: HTH-type transcriptional regulator EcpR (196 aa).

Positions 138-196 (KDIKKDKITDREMEIIRMTAQGMQPKSIARIENCSVKTVYTHRRNAEAKLYSKIYKLVQ) constitute an HTH luxR-type domain. Positions 162-181 (PKSIARIENCSVKTVYTHRR) form a DNA-binding region, H-T-H motif.

This sequence belongs to the EcpR/MatA family.

It localises to the cytoplasm. Part of the ecpRABCDE operon, which encodes the E.coli common pilus (ECP). ECP is found in both commensal and pathogenic strains and plays a dual role in early-stage biofilm development and host cell recognition. Positively regulates the expression of the ecp operon. The polypeptide is HTH-type transcriptional regulator EcpR (ecpR) (Escherichia coli (strain K12 / DH10B)).